Consider the following 105-residue polypeptide: Co-chaperonin GroES (105 aa).

The protein belongs to the GroES chaperonin family. As to quaternary structure, heptamer of 7 subunits arranged in a ring. Interacts with the chaperonin GroEL.

It is found in the cytoplasm. Its function is as follows. Together with the chaperonin GroEL, plays an essential role in assisting protein folding. The GroEL-GroES system forms a nano-cage that allows encapsulation of the non-native substrate proteins and provides a physical environment optimized to promote and accelerate protein folding. GroES binds to the apical surface of the GroEL ring, thereby capping the opening of the GroEL channel. This Methylovorus sp. (strain SS1 / DSM 11726) protein is Co-chaperonin GroES.